Consider the following 542-residue polypeptide: Putative serine/threonine-protein kinase L205 (542 aa).

Positions 20–30 (FEKKSVGHNSD) are enriched in basic and acidic residues. The tract at residues 20 to 49 (FEKKSVGHNSDDEYDDTVPYNEDDETSEEE) is disordered. A compositionally biased stretch (acidic residues) spans 31–49 (DEYDDTVPYNEDDETSEEE). Positions 69–538 (YLLLKKIGSG…ADELLKHPWL (470 aa)) constitute a Protein kinase domain. ATP contacts are provided by residues 75–83 (IGSGNNASV) and lysine 98. Aspartate 201 serves as the catalytic Proton acceptor. Positions 278-314 (EELIPDDPDNNEKYYDSTDSEEYDYSDNSDYYDDDED) are disordered. Residues 295 to 314 (TDSEEYDYSDNSDYYDDDED) show a composition bias toward acidic residues.

The protein belongs to the protein kinase superfamily. Ser/Thr protein kinase family.

It carries out the reaction L-seryl-[protein] + ATP = O-phospho-L-seryl-[protein] + ADP + H(+). It catalyses the reaction L-threonyl-[protein] + ATP = O-phospho-L-threonyl-[protein] + ADP + H(+). This Acanthamoeba polyphaga (Amoeba) protein is Putative serine/threonine-protein kinase L205.